The sequence spans 267 residues: tRNA pseudouridine synthase A (267 aa).

The active-site Nucleophile is the D55. Y109 is a substrate binding site.

The protein belongs to the tRNA pseudouridine synthase TruA family.

It carries out the reaction uridine(38/39/40) in tRNA = pseudouridine(38/39/40) in tRNA. Formation of pseudouridine at positions 38, 39 and 40 in the anticodon stem and loop of transfer RNAs. In Natronomonas pharaonis (strain ATCC 35678 / DSM 2160 / CIP 103997 / JCM 8858 / NBRC 14720 / NCIMB 2260 / Gabara) (Halobacterium pharaonis), this protein is tRNA pseudouridine synthase A.